The primary structure comprises 1230 residues: DNA-directed RNA polymerase, mitochondrial (1230 aa).

Residues Met1–Ser41 constitute a mitochondrion transit peptide. Disordered regions lie at residues Arg18–Lys55, Gly95–Thr115, and Val731–Ala750. The segment covering Pro732–Ala744 has biased composition (pro residues). A mediates interaction with TEFM region spans residues Phe802–Ser1230. Catalysis depends on residues Asp922, Lys991, and Asp1151.

Belongs to the phage and mitochondrial RNA polymerase family. As to quaternary structure, homodimer. Component of the mitochondrial transcription initiation complex, composed at least of TFB2M, TFAM and POLRMT. In this complex TFAM recruits POLRMT to the promoter whereas TFB2M induces structural changes in POLRMT to enable promoter opening and trapping of the DNA non-template strand. Upon metabolic stress, forms a complex composed of FOXO3, SIRT3 and mitochondrial RNA polymerase POLRMT; the complex is recruited to mtDNA in a SIRT3-dependent manner. Also forms a complex composed of FOXO3, SIRT3, TFAM and POLRMT. Interacts with TFB1M and TFB2M, leading to the stimulation of transcription. Interacts with TEFM. Interacts with MTRES1.

The protein localises to the mitochondrion. It catalyses the reaction RNA(n) + a ribonucleoside 5'-triphosphate = RNA(n+1) + diphosphate. DNA-dependent RNA polymerase catalyzes the transcription of mitochondrial DNA into RNA using the four ribonucleoside triphosphates as substrates. Component of the mitochondrial transcription initiation complex, composed at least of TFB2M, TFAM and POLRMT that is required for basal transcription of mitochondrial DNA. In this complex, TFAM recruits POLRMT to a specific promoter whereas TFB2M induces structural changes in POLRMT to enable promoter opening and trapping of the DNA non-template strand. Has DNA primase activity. Catalyzes the synthesis of short RNA primers that are necessary for the initiation of lagging-strand DNA synthesis from the origin of light-strand DNA replication (OriL). The polypeptide is DNA-directed RNA polymerase, mitochondrial (Homo sapiens (Human)).